Here is a 329-residue protein sequence, read N- to C-terminus: Diaminopimelate epimerase (329 aa).

Residues Asn14 and Asn73 each coordinate substrate. Cys82 acts as the Proton donor in catalysis. Residues Gly83 to Asn84, Asn170, Asn206, and Glu224 to Arg225 contribute to the substrate site. Residue Cys233 is the Proton acceptor of the active site. Gly234–Thr235 is a binding site for substrate.

It belongs to the diaminopimelate epimerase family. In terms of assembly, homodimer.

The protein localises to the cytoplasm. It carries out the reaction (2S,6S)-2,6-diaminopimelate = meso-2,6-diaminopimelate. It functions in the pathway amino-acid biosynthesis; L-lysine biosynthesis via DAP pathway; DL-2,6-diaminopimelate from LL-2,6-diaminopimelate: step 1/1. Functionally, catalyzes the stereoinversion of LL-2,6-diaminopimelate (L,L-DAP) to meso-diaminopimelate (meso-DAP), a precursor of L-lysine and an essential component of the bacterial peptidoglycan. The protein is Diaminopimelate epimerase of Listeria monocytogenes serotype 4b (strain F2365).